The following is a 162-amino-acid chain: Large ribosomal subunit protein uL15 (162 aa).

The segment covering 1–13 (MKLNEIRDNEGAT) has biased composition (basic and acidic residues). Residues 1–37 (MKLNEIRDNEGATKNRMRVGRGIGSGKGKTAGRGVKG) form a disordered region. The span at 21–35 (RGIGSGKGKTAGRGV) shows a compositional bias: gly residues.

The protein belongs to the universal ribosomal protein uL15 family. As to quaternary structure, part of the 50S ribosomal subunit.

Functionally, binds to the 23S rRNA. This Methylobacterium nodulans (strain LMG 21967 / CNCM I-2342 / ORS 2060) protein is Large ribosomal subunit protein uL15.